The primary structure comprises 576 residues: G protein-coupled receptor kinase 6 (576 aa).

The N-terminal stretch occupies residues 1–185 (MELENIVANT…LERQPVTKNT (185 aa)). An RGS domain is found at 53-171 (YHSLCERQPI…LDSIYFNRFL (119 aa)). The 263-residue stretch at 186–448 (FRQYRVLGKG…AREVKEHPLF (263 aa)) folds into the Protein kinase domain. ATP is bound by residues 192 to 200 (LGKGGFGEV), Lys215, and 264 to 270 (TLMNGGD). Catalysis depends on Asp311, which acts as the Proton acceptor. An ATP-binding site is contributed by 315–318 (ENIL). Positions 449-514 (KKLNFKRLGA…GSVSIPWQNE (66 aa)) constitute an AGC-kinase C-terminal domain. Ser484 is subject to Phosphoserine; by autocatalysis. Thr485 bears the Phosphothreonine; by autocatalysis mark. 3 S-palmitoyl cysteine lipidation sites follow: Cys561, Cys562, and Cys565. Ser566 and Ser568 each carry phosphoserine.

The protein belongs to the protein kinase superfamily. AGC Ser/Thr protein kinase family. GPRK subfamily. Interacts with GIT1. As to expression, widely expressed. Detectable in all brain areas examined.

It is found in the membrane. The catalysed reaction is [G-protein-coupled receptor] + ATP = [G-protein-coupled receptor]-phosphate + ADP + H(+). Its function is as follows. Specifically phosphorylates the activated forms of G protein-coupled receptors. Such receptor phosphorylation initiates beta-arrestin-mediated receptor desensitization, internalization, and signaling events leading to their desensitization. Seems to be involved in the desensitization of D2-like dopamine receptors in striatum and chemokine receptor CXCR4 which is critical for CXCL12-induced cell chemotaxis. Phosphorylates rhodopsin (RHO) (in vitro) and a non G-protein-coupled receptor: LRP6 during Wnt signaling (in vitro). This is G protein-coupled receptor kinase 6 (Grk6) from Rattus norvegicus (Rat).